The sequence spans 511 residues: Maturase K (511 aa).

It belongs to the intron maturase 2 family. MatK subfamily.

It is found in the plastid. The protein resides in the chloroplast. In terms of biological role, usually encoded in the trnK tRNA gene intron. Probably assists in splicing its own and other chloroplast group II introns. This is Maturase K from Hordeum jubatum (Foxtail barley).